Here is a 247-residue protein sequence, read N- to C-terminus: UDP-2,3-diacylglucosamine hydrolase (247 aa).

Residues D8, H10, D41, N79, and H114 each contribute to the Mn(2+) site. 79 to 80 contacts substrate; it reads NR. Substrate is bound by residues D122, S160, D171, Q174, and H202. The Mn(2+) site is built by H202 and H204.

The protein belongs to the LpxH family. Mn(2+) serves as cofactor.

Its subcellular location is the cell inner membrane. It carries out the reaction UDP-2-N,3-O-bis[(3R)-3-hydroxytetradecanoyl]-alpha-D-glucosamine + H2O = 2-N,3-O-bis[(3R)-3-hydroxytetradecanoyl]-alpha-D-glucosaminyl 1-phosphate + UMP + 2 H(+). It functions in the pathway glycolipid biosynthesis; lipid IV(A) biosynthesis; lipid IV(A) from (3R)-3-hydroxytetradecanoyl-[acyl-carrier-protein] and UDP-N-acetyl-alpha-D-glucosamine: step 4/6. In terms of biological role, hydrolyzes the pyrophosphate bond of UDP-2,3-diacylglucosamine to yield 2,3-diacylglucosamine 1-phosphate (lipid X) and UMP by catalyzing the attack of water at the alpha-P atom. Involved in the biosynthesis of lipid A, a phosphorylated glycolipid that anchors the lipopolysaccharide to the outer membrane of the cell. In Xanthomonas campestris pv. campestris (strain B100), this protein is UDP-2,3-diacylglucosamine hydrolase.